The sequence spans 510 residues: NAD(P)H-quinone oxidoreductase subunit 2 B, chloroplastic (510 aa).

The next 13 membrane-spanning stretches (helical) occupy residues 24–44 (LLLF…GLIL), 57–77 (IPWL…ALLF), 99–119 (IFQF…VEYI), 124–144 (MAIT…MFLC), 150–170 (ITIF…SGYT), 183–203 (YLLM…WLYG), 227–247 (PGIS…LSPA), 295–315 (WHLL…LIAI), 323–343 (MLAY…IVGD), 347–367 (GYAS…GTFA), 395–415 (ALSS…AGFF), 418–438 (LHLF…IGLL), and 484–504 (MIVC…IIAI).

This sequence belongs to the complex I subunit 2 family. As to quaternary structure, NDH is composed of at least 16 different subunits, 5 of which are encoded in the nucleus.

The protein resides in the plastid. It is found in the chloroplast thylakoid membrane. The catalysed reaction is a plastoquinone + NADH + (n+1) H(+)(in) = a plastoquinol + NAD(+) + n H(+)(out). The enzyme catalyses a plastoquinone + NADPH + (n+1) H(+)(in) = a plastoquinol + NADP(+) + n H(+)(out). Functionally, NDH shuttles electrons from NAD(P)H:plastoquinone, via FMN and iron-sulfur (Fe-S) centers, to quinones in the photosynthetic chain and possibly in a chloroplast respiratory chain. The immediate electron acceptor for the enzyme in this species is believed to be plastoquinone. Couples the redox reaction to proton translocation, and thus conserves the redox energy in a proton gradient. The chain is NAD(P)H-quinone oxidoreductase subunit 2 B, chloroplastic from Chloranthus spicatus (Chulantree).